Reading from the N-terminus, the 156-residue chain is Small ribosomal subunit protein uS7 (156 aa).

The protein belongs to the universal ribosomal protein uS7 family. As to quaternary structure, part of the 30S ribosomal subunit. Contacts proteins S9 and S11.

Functionally, one of the primary rRNA binding proteins, it binds directly to 16S rRNA where it nucleates assembly of the head domain of the 30S subunit. Is located at the subunit interface close to the decoding center, probably blocks exit of the E-site tRNA. This is Small ribosomal subunit protein uS7 from Rhodopseudomonas palustris (strain BisA53).